A 145-amino-acid chain; its full sequence is uncharacterized protein (145 aa).

The signal sequence occupies residues 1–20 (MPSKVCTLILLFSVINQMKC).

This is an uncharacterized protein from Caenorhabditis elegans.